The following is a 273-amino-acid chain: MITETAYAKINLALHVRSKREDGYHEIETLFAFVDAGDVLVARAAEADRLETVGEFADVLDNPFDNLVARTMSTLPREGGLHVTLEKNLPVAAGLGGGSADAGAMFRIIEQMHGLPDDWEEKAIRLGADVPACVASEMAIGRGTGTDLEPVENDMAGMAVLLVNLRVPLPTGPVFKAWADTAGGEDLGPLPTGTAREIARKGRNDLRPPAVAICPPIADVLQALEATDPWMCEMSGSGATCFALYDETEMRDKAARAIAEHHPGWWQMTGTLQ.

Lysine 9 is an active-site residue. 90-100 (PVAAGLGGGSA) is a binding site for ATP. Aspartate 129 is an active-site residue.

This sequence belongs to the GHMP kinase family. IspE subfamily.

It catalyses the reaction 4-CDP-2-C-methyl-D-erythritol + ATP = 4-CDP-2-C-methyl-D-erythritol 2-phosphate + ADP + H(+). It functions in the pathway isoprenoid biosynthesis; isopentenyl diphosphate biosynthesis via DXP pathway; isopentenyl diphosphate from 1-deoxy-D-xylulose 5-phosphate: step 3/6. Catalyzes the phosphorylation of the position 2 hydroxy group of 4-diphosphocytidyl-2C-methyl-D-erythritol. The chain is 4-diphosphocytidyl-2-C-methyl-D-erythritol kinase from Erythrobacter litoralis (strain HTCC2594).